The following is a 745-amino-acid chain: Gamma-tubulin complex component 4 (745 aa).

This sequence belongs to the TUBGCP family. In terms of assembly, gamma-tubulin complex is composed of gamma-tubulin and GCP proteins.

The protein resides in the cytoplasm. It localises to the cytoskeleton. It is found in the microtubule organizing center. Its subcellular location is the spindle. Its function is as follows. Gamma-tubulin complex is necessary for microtubule nucleation at the microtubule organizing centers (MTOCs). Gamma-tubulin complex is essential for the control of microtubular network remodeling in the course of initiation and development of giant-feeding cells, and for the successful reproduction of nematodes (e.g. Meloidogyne spp.) in their plant hosts. This chain is Gamma-tubulin complex component 4 (GCP4), found in Arabidopsis thaliana (Mouse-ear cress).